The chain runs to 148 residues: Cytochrome c-type biogenesis protein CcmE (148 aa).

Residues 1-7 (MKPRSKR) are Cytoplasmic-facing. The helical; Signal-anchor for type II membrane protein transmembrane segment at 8-28 (LLLVAGAVALLVGAVALVLNA) threads the bilayer. Residues 29–148 (FQQNLVFFHT…AQKAAQTVQQ (120 aa)) are Periplasmic-facing. Heme is bound by residues H123 and Y127.

It belongs to the CcmE/CycJ family.

It localises to the cell inner membrane. Its function is as follows. Heme chaperone required for the biogenesis of c-type cytochromes. Transiently binds heme delivered by CcmC and transfers the heme to apo-cytochromes in a process facilitated by CcmF and CcmH. The protein is Cytochrome c-type biogenesis protein CcmE of Aromatoleum aromaticum (strain DSM 19018 / LMG 30748 / EbN1) (Azoarcus sp. (strain EbN1)).